Here is a 369-residue protein sequence, read N- to C-terminus: Glutamate 5-kinase (369 aa).

Position 14 (Lys14) interacts with ATP. Residues Ser56, Asp143, and Asn155 each contribute to the substrate site. ATP contacts are provided by residues 175–176 (SD) and 215–221 (TGGMASK). The PUA domain maps to 277 to 351 (AGKIRLDDGA…GMQTQDLPDG (75 aa)).

Belongs to the glutamate 5-kinase family.

Its subcellular location is the cytoplasm. It carries out the reaction L-glutamate + ATP = L-glutamyl 5-phosphate + ADP. The protein operates within amino-acid biosynthesis; L-proline biosynthesis; L-glutamate 5-semialdehyde from L-glutamate: step 1/2. Catalyzes the transfer of a phosphate group to glutamate to form L-glutamate 5-phosphate. The protein is Glutamate 5-kinase of Corynebacterium glutamicum (strain ATCC 13032 / DSM 20300 / JCM 1318 / BCRC 11384 / CCUG 27702 / LMG 3730 / NBRC 12168 / NCIMB 10025 / NRRL B-2784 / 534).